The following is a 141-amino-acid chain: Hemoglobin subunit alpha-D (141 aa).

Residues 1–141 (MLTADDKKLL…VAAVLAEKYR (141 aa)) form the Globin domain. Positions 58 and 87 each coordinate heme b.

It belongs to the globin family. As to quaternary structure, heterotetramer of two alpha-D chains and two beta chains. As to expression, red blood cells.

Its function is as follows. Involved in oxygen transport from the lung to the various peripheral tissues. The chain is Hemoglobin subunit alpha-D (HBAD) from Anser anser anser (Western greylag goose).